The primary structure comprises 293 residues: Small ribosomal subunit protein uS2 (293 aa).

The tract at residues 239–293 (PAGGADWEAAPAGFPAAATGEWSEAQPATWESGAAAATGPSTEWADSAPKDTAGW) is disordered. A compositionally biased stretch (low complexity) spans 247-256 (AAPAGFPAAA).

Belongs to the universal ribosomal protein uS2 family. Component of the small ribosomal subunit. Mature ribosomes consist of a small (40S) and a large (60S) subunit. The 40S subunit contains about 33 different proteins and 1 molecule of RNA (18S). The 60S subunit contains about 49 different proteins and 3 molecules of RNA (25S, 5.8S and 5S). Interacts with RPS21.

It is found in the cytoplasm. Required for the assembly and/or stability of the 40S ribosomal subunit. Required for the processing of the 20S rRNA-precursor to mature 18S rRNA in a late step of the maturation of 40S ribosomal subunits. The chain is Small ribosomal subunit protein uS2 from Chaetomium globosum (strain ATCC 6205 / CBS 148.51 / DSM 1962 / NBRC 6347 / NRRL 1970) (Soil fungus).